The sequence spans 138 residues: Large ribosomal subunit protein uL16 (138 aa).

Residues 1–17 (MLQPKRTKFRKQHKGRN) show a composition bias toward basic residues. The interval 1–22 (MLQPKRTKFRKQHKGRNRGVAT) is disordered.

The protein belongs to the universal ribosomal protein uL16 family. Part of the 50S ribosomal subunit.

Its function is as follows. Binds 23S rRNA and is also seen to make contacts with the A and possibly P site tRNAs. This chain is Large ribosomal subunit protein uL16, found in Acidithiobacillus ferrooxidans (strain ATCC 23270 / DSM 14882 / CIP 104768 / NCIMB 8455) (Ferrobacillus ferrooxidans (strain ATCC 23270)).